A 727-amino-acid polypeptide reads, in one-letter code: Telomere repeats-binding bouquet formation protein 1 (727 aa).

2 ARM repeats span residues E101–G144 and N339–P382. Positions E398 to T446 form a coiled coil. The segment covering R457 to H468 has biased composition (basic and acidic residues). A disordered region spans residues R457 to T493. The segment at Q523–P662 is interaction with TERF1. Position 648 is a phosphothreonine (T648). The region spanning K666–T719 is the Myb-like domain.

This sequence belongs to the TERB1 family. As to quaternary structure, component of the MAJIN-TERB1-TERB2 complex, composed of MAJIN, TERB1 and TERB2. Interacts with TERF1, STAG3 and SUN1. Interacts (via Myb-like domain) with the cohesin complex; probably mediated via interaction with STAG3. Post-translationally, phosphorylated by CDK. Phosphorylation by CDK takes place in late prophase when the cap exchange is prominent. is important for the stabilization of telomere attachment but dispenable for the cap exchange.

It localises to the chromosome. The protein localises to the telomere. The protein resides in the nucleus inner membrane. Functionally, meiosis-specific telomere-associated protein involved in meiotic telomere attachment to the nucleus inner membrane, a crucial step for homologous pairing and synapsis. Component of the MAJIN-TERB1-TERB2 complex, which promotes telomere cap exchange by mediating attachment of telomeric DNA to the inner nuclear membrane and replacement of the protective cap of telomeric chromosomes: in early meiosis, the MAJIN-TERB1-TERB2 complex associates with telomeric DNA and the shelterin/telosome complex. During prophase, the complex matures and promotes release of the shelterin/telosome complex from telomeric DNA. In the MAJIN-TERB1-TERB2 complex, TERB1 probably mediates association with the shelterin/telosome complex via interaction with TERF1, promoting priming telomeric DNA attachment'. Promotes telomere association with the nuclear envelope and deposition of the SUN-KASH/LINC complex. Also recruits cohesin to telomeres to develop structural rigidity. The polypeptide is Telomere repeats-binding bouquet formation protein 1 (Homo sapiens (Human)).